A 728-amino-acid chain; its full sequence is Microtubule-associated protein VP5 (728 aa).

The protein belongs to the reoviridae microtubule-associated protein family.

It localises to the virion. Its subcellular location is the host cytoplasm. The protein resides in the host cytoskeleton. Functionally, minor inner capsid component. Displays NTPase and RNA 5'-triphosphatase (RTPase) activities. May function as a cofactor of polymerase. Associates with microtubules and plays a role in the formation, structural organization and morphology of viral inclusions, where the assembly of cores and the replication of viral RNA occur. This Aquareovirus C (isolate Golden shiner/USA/GSRV/1977) (AQRV-C) protein is Microtubule-associated protein VP5 (S5).